A 563-amino-acid polypeptide reads, in one-letter code: Zinc finger CCHC domain-containing protein 7 (563 aa).

Disordered regions lie at residues 41 to 64 (SQNL…VPGA) and 133 to 157 (SHST…QNSS). Residues 133–142 (SHSTPKVSAP) show a composition bias toward polar residues. Over residues 143–157 (QSNNFKSQKSCQNSS) the composition is skewed to low complexity. CCHC-type zinc fingers lie at residues 265–282 (VVCR…NCPV), 287–304 (PACC…SCPS), 305–322 (RYCL…ECIE), 328–345 (KTCH…ACPE), and 372–389 (VYCC…ECKE). The disordered stretch occupies residues 443 to 494 (KVDAKPPAKKRKKKHPSKKERKGTIRDYECAETKQKKKHKKRKSGLQEIEGD). Residues 449 to 463 (PAKKRKKKHPSKKER) are compositionally biased toward basic residues. Residues 464–476 (KGTIRDYECAETK) show a composition bias toward basic and acidic residues. Basic residues predominate over residues 477–486 (QKKKHKKRKS).

In terms of assembly, component of a nucleolar TRAMP-like complex, an ATP-dependent exosome regulatory complex consisting of a helicase (MTREX), an oligadenylate polymerase (PAPD5 or PAPD7), and a substrate specific RNA-binding factor (ZCCHC7 or ZCCHC8). Several TRAMP-like complexes exist with specific compositions and are associated with nuclear, or nucleolar RNA exosomes.

The protein resides in the nucleus. The protein localises to the nucleolus. The chain is Zinc finger CCHC domain-containing protein 7 (zcchc7) from Xenopus laevis (African clawed frog).